Consider the following 296-residue polypeptide: 4-hydroxy-tetrahydrodipicolinate synthase (296 aa).

T49 lines the pyruvate pocket. The active-site Proton donor/acceptor is Y137. The active-site Schiff-base intermediate with substrate is the K166. Pyruvate is bound at residue V208.

This sequence belongs to the DapA family. In terms of assembly, homotetramer; dimer of dimers.

The protein resides in the cytoplasm. The enzyme catalyses L-aspartate 4-semialdehyde + pyruvate = (2S,4S)-4-hydroxy-2,3,4,5-tetrahydrodipicolinate + H2O + H(+). Its pathway is amino-acid biosynthesis; L-lysine biosynthesis via DAP pathway; (S)-tetrahydrodipicolinate from L-aspartate: step 3/4. Catalyzes the condensation of (S)-aspartate-beta-semialdehyde [(S)-ASA] and pyruvate to 4-hydroxy-tetrahydrodipicolinate (HTPA). This Desulforamulus reducens (strain ATCC BAA-1160 / DSM 100696 / MI-1) (Desulfotomaculum reducens) protein is 4-hydroxy-tetrahydrodipicolinate synthase.